Reading from the N-terminus, the 233-residue chain is Leucyl/phenylalanyl-tRNA--protein transferase (233 aa).

The protein belongs to the L/F-transferase family.

The protein localises to the cytoplasm. It catalyses the reaction N-terminal L-lysyl-[protein] + L-leucyl-tRNA(Leu) = N-terminal L-leucyl-L-lysyl-[protein] + tRNA(Leu) + H(+). The enzyme catalyses N-terminal L-arginyl-[protein] + L-leucyl-tRNA(Leu) = N-terminal L-leucyl-L-arginyl-[protein] + tRNA(Leu) + H(+). It carries out the reaction L-phenylalanyl-tRNA(Phe) + an N-terminal L-alpha-aminoacyl-[protein] = an N-terminal L-phenylalanyl-L-alpha-aminoacyl-[protein] + tRNA(Phe). Its function is as follows. Functions in the N-end rule pathway of protein degradation where it conjugates Leu, Phe and, less efficiently, Met from aminoacyl-tRNAs to the N-termini of proteins containing an N-terminal arginine or lysine. This Desulfatibacillum aliphaticivorans protein is Leucyl/phenylalanyl-tRNA--protein transferase.